Reading from the N-terminus, the 404-residue chain is Probable tRNA sulfurtransferase (404 aa).

Residues 60-165 enclose the THUMP domain; that stretch reads EEVIPKLSKV…KDAAYLSYET (106 aa). ATP is bound by residues 183–184, 208–209, Arg265, Gly287, and Gln296; these read ML and HF.

The protein belongs to the ThiI family.

The protein localises to the cytoplasm. It carries out the reaction [ThiI sulfur-carrier protein]-S-sulfanyl-L-cysteine + a uridine in tRNA + 2 reduced [2Fe-2S]-[ferredoxin] + ATP + H(+) = [ThiI sulfur-carrier protein]-L-cysteine + a 4-thiouridine in tRNA + 2 oxidized [2Fe-2S]-[ferredoxin] + AMP + diphosphate. The catalysed reaction is [ThiS sulfur-carrier protein]-C-terminal Gly-Gly-AMP + S-sulfanyl-L-cysteinyl-[cysteine desulfurase] + AH2 = [ThiS sulfur-carrier protein]-C-terminal-Gly-aminoethanethioate + L-cysteinyl-[cysteine desulfurase] + A + AMP + 2 H(+). The protein operates within cofactor biosynthesis; thiamine diphosphate biosynthesis. Its function is as follows. Catalyzes the ATP-dependent transfer of a sulfur to tRNA to produce 4-thiouridine in position 8 of tRNAs, which functions as a near-UV photosensor. Also catalyzes the transfer of sulfur to the sulfur carrier protein ThiS, forming ThiS-thiocarboxylate. This is a step in the synthesis of thiazole, in the thiamine biosynthesis pathway. The sulfur is donated as persulfide by IscS. The protein is Probable tRNA sulfurtransferase of Enterococcus faecalis (strain ATCC 700802 / V583).